Consider the following 200-residue polypeptide: Ras-related protein RHN1 (200 aa).

Residues 17–25 (GDMGAGKSS), 36–42 (LEFQEST), 65–69 (DTAGQ), 123–126 (NKAD), and 153–155 (SAK) contribute to the GTP site. Residues 39–47 (QESTIGAAF) carry the Effector region motif. S-geranylgeranyl cysteine attachment occurs at residues Cys-198 and Cys-199.

Belongs to the small GTPase superfamily. Rab family. As to expression, high in stem, root, and inflorescence.

It localises to the cell membrane. In terms of biological role, protein transport. Probably involved in vesicular traffic. The sequence is that of Ras-related protein RHN1 (RHN1) from Nicotiana plumbaginifolia (Leadwort-leaved tobacco).